A 367-amino-acid chain; its full sequence is Coiled-coil domain-containing protein 34 (367 aa).

Residue S55 is modified to Phosphoserine. Disordered stretches follow at residues 77-105, 191-228, and 310-349; these read FPFG…KVES, QKKN…KAKE, and YNPI…SSLA. Acidic residues predominate over residues 82–97; the sequence is DDSEGEDEEALDEDAR. 2 coiled-coil regions span residues 87-108 and 153-280; these read EDEE…SLEG and RLQQ…AKNK. The segment covering 197–228 has biased composition (basic and acidic residues); that stretch reads ERKEREQKINKEMEEKEAKKREKEHLQEKAKE. Low complexity predominate over residues 339-349; the sequence is ASQPLPSSSLA.

Expressed in testis and sperm.

Its subcellular location is the cell projection. The protein localises to the cilium. The protein resides in the flagellum. Its function is as follows. Involved in spermatogenesis. Has a probable role in anterograde intraflagellar transport which is essential for the formation of sperm flagella. This is Coiled-coil domain-containing protein 34 (Ccdc34) from Mus musculus (Mouse).